Here is a 110-residue protein sequence, read N- to C-terminus: uncharacterized protein (110 aa).

May play a regulatory role in sulfomenaquinone (SMK) biosynthesis. This is an uncharacterized protein from Mycobacterium bovis (strain ATCC BAA-935 / AF2122/97).